Reading from the N-terminus, the 535-residue chain is MEKGARHRHNTDKNHAGGSESEDFPEASSGGGGVALKKEIGLVSACGIIVGNIIGSGIFVSPKGVLENAGSVGLAVIVWIVTGLITAVGALCYAELGVTIPKSGGDYSYVKDIFGGLAGFLRLWIAVLVIYPTNQAVIALTFSNYVLQPLFPTCFPPDSGLRLLAAICLLLLTWVNCSSVRWATRVQDIFTAGKLLALALIIIMGVVQICKGEYFWLEPKNAFDNFQEPDIGLIALAFLQGSFAYGGWNFLNYVTEELVDPYKNLPRAIFISIPLVTFVYVFANVAYITAMSPQELLASNAVAVTFGEKLLGVMAWIMPISVALSTFGGVNGSLFTSSRLFFAGAREGHLPSVLAMIHVKRCTPIPALLFTCLSTLLMLVTSDMYTLINYVGFINYLFYGVTVAGQIVLRWKKPDIPRPIKINLLFPIIYLLFWAFLLIFSLWSEPVVCGIGLAIMLTGVPVYFLGVYWQHKPKCFNDFIELLTLVSQKMCVVVYPEVDGGSGTEGTREDMEEQQQPICQPSPGKDKDSLEQSQP.

Positions 1-10 (MEKGARHRHN) are enriched in basic residues. Residues 1-30 (MEKGARHRHNTDKNHAGGSESEDFPEASSG) are disordered. Over 1-44 (MEKGARHRHNTDKNHAGGSESEDFPEASSGGGGVALKKEIGLVS) the chain is Cytoplasmic. A phosphoserine mark is found at S19, S28, and S29. A helical membrane pass occupies residues 45–65 (ACGIIVGNIIGSGIFVSPKGV). An L-leucine-binding site is contributed by I53. Residues 66–73 (LENAGSVG) are Extracellular-facing. The chain crosses the membrane as a helical span at residues 74 to 95 (LAVIVWIVTGLITAVGALCYAE). At 96-116 (LGVTIPKSGGDYSYVKDIFGG) the chain is on the cytoplasmic side. The helical transmembrane segment at 117–149 (LAGFLRLWIAVLVIYPTNQAVIALTFSNYVLQP) threads the bilayer. An L-tryptophan-binding site is contributed by N134. At 150–157 (LFPTCFPP) the chain is on the extracellular side. A helical transmembrane segment spans residues 158–178 (DSGLRLLAAICLLLLTWVNCS). At 179–181 (SVR) the chain is on the cytoplasmic side. Residues 182–210 (WATRVQDIFTAGKLLALALIIIMGVVQIC) traverse the membrane as a helical segment. Residues 211 to 230 (KGEYFWLEPKNAFDNFQEPD) lie on the Extracellular side of the membrane. The helical transmembrane segment at 231-252 (IGLIALAFLQGSFAYGGWNFLN) threads the bilayer. G246 is a binding site for L-leucine. The Cytoplasmic segment spans residues 253–265 (YVTEELVDPYKNL). Residues 266 to 287 (PRAIFISIPLVTFVYVFANVAY) form a helical membrane-spanning segment. Residues 288–312 (ITAMSPQELLASNAVAVTFGEKLLG) lie on the Extracellular side of the membrane. Residues 313-338 (VMAWIMPISVALSTFGGVNGSLFTSS) form a helical membrane-spanning segment. At 339–364 (RLFFAGAREGHLPSVLAMIHVKRCTP) the chain is on the cytoplasmic side. The chain crosses the membrane as a helical span at residues 365-382 (IPALLFTCLSTLLMLVTS). The Extracellular portion of the chain corresponds to 383-386 (DMYT). A helical transmembrane segment spans residues 387 to 408 (LINYVGFINYLFYGVTVAGQIV). N395 is an L-tryptophan binding site. At 409 to 423 (LRWKKPDIPRPIKIN) the chain is on the cytoplasmic side. 2 helical membrane-spanning segments follow: residues 424–446 (LLFPIIYLLFWAFLLIFSLWSEP) and 447–466 (VVCGIGLAIMLTGVPVYFLG). Topologically, residues 467–535 (VYWQHKPKCF…DKDSLEQSQP (69 aa)) are cytoplasmic. Positions 500 to 535 (GGSGTEGTREDMEEQQQPICQPSPGKDKDSLEQSQP) are disordered. Positions 524–535 (GKDKDSLEQSQP) are enriched in basic and acidic residues. Phosphoserine is present on S529.

Belongs to the amino acid-polyamine-organocation (APC) superfamily. L-type amino acid transporter (LAT) (TC 2.A.3.8) family. As to quaternary structure, disulfide-linked heterodimer composed of the catalytic light chain subunit SLC7A8 and the heavy chain subunit SLC3A2. SLC3A2 acts as a chaperone for correct plasma membrane trafficking and stabilization of SLC7A8 and modulates the substrate affinity and specificity of SLC7A8. ICAM-1 associates with the heterodimer SLC3A2/SLC7A8; facilitates leucine uptake. Mainly expressed in kidney and small intestine.

It is found in the cell membrane. It localises to the basolateral cell membrane. The catalysed reaction is L-histidine(in) + L-phenylalanine(out) = L-histidine(out) + L-phenylalanine(in). It carries out the reaction L-tryptophan(in) + L-phenylalanine(out) = L-tryptophan(out) + L-phenylalanine(in). It catalyses the reaction L-isoleucine(in) + L-phenylalanine(out) = L-isoleucine(out) + L-phenylalanine(in). The enzyme catalyses L-valine(in) + L-phenylalanine(out) = L-valine(out) + L-phenylalanine(in). The catalysed reaction is L-leucine(in) + L-phenylalanine(out) = L-leucine(out) + L-phenylalanine(in). It carries out the reaction L-glutamine(in) + L-phenylalanine(out) = L-glutamine(out) + L-phenylalanine(in). It catalyses the reaction L-cysteine(in) + L-phenylalanine(out) = L-cysteine(out) + L-phenylalanine(in). The enzyme catalyses L-phenylalanine(out) + L-methionine(in) = L-phenylalanine(in) + L-methionine(out). The catalysed reaction is L-leucine(out) + L-methionine(in) = L-leucine(in) + L-methionine(out). It carries out the reaction L-cysteine(out) + L-methionine(in) = L-cysteine(in) + L-methionine(out). It catalyses the reaction S-methylmercury-L-cysteine(out) + L-methionine(in) = S-methylmercury-L-cysteine(in) + L-methionine(out). The enzyme catalyses S-methylmercury-L-cysteine(in) + L-leucine(out) = S-methylmercury-L-cysteine(out) + L-leucine(in). The catalysed reaction is S-methylmercury-L-cysteine(in) + L-phenylalanine(out) = S-methylmercury-L-cysteine(out) + L-phenylalanine(in). It carries out the reaction L-phenylalanine(out) + L-serine(in) = L-phenylalanine(in) + L-serine(out). It catalyses the reaction L-phenylalanine(out) + glycine(in) = L-phenylalanine(in) + glycine(out). The enzyme catalyses L-phenylalanine(out) + L-alanine(in) = L-phenylalanine(in) + L-alanine(out). The catalysed reaction is 3,3',5-triiodo-L-thyronine(out) = 3,3',5-triiodo-L-thyronine(in). It carries out the reaction 3,3'-diiodo-L-thyronine(out) = 3,3'-diiodo-L-thyronine(in). It catalyses the reaction L-dopa(out) + L-phenylalanine(in) = L-dopa(in) + L-phenylalanine(out). Its activity is regulated as follows. The transporter activity is inhibited by 2-aminobicyclo-(2,2,1)heptane-2-carboxylic acid (BCH) (a specific inhibitor of system L transport). Its function is as follows. Associates with SLC3A2 to form a functional heterodimeric complex that translocates small and large neutral amino acids with broad specificity and a stoichiometry of 1:1. Functions as amino acid antiporter mediating the influx of extracellular essential amino acids mainly in exchange with the efflux of highly concentrated intracellular amino acids. Has relatively symmetrical selectivities but strongly asymmetrical substrate affinities at both the intracellular and extracellular sides of the transporter. This asymmetry allows SLC7A8 to regulate intracellular amino acid pools (mM concentrations) by exchange with external amino acids (uM concentration range), equilibrating the relative concentrations of different amino acids across the plasma membrane instead of mediating their net uptake. May play an essential role in the reabsorption of neutral amino acids from the epithelial cells to the bloodstream in the kidney. Involved in the uptake of methylmercury (MeHg) when administered as the L-cysteine or D,L-homocysteine complexes, and hence plays a role in metal ion homeostasis and toxicity. Involved in the cellular activity of small molecular weight nitrosothiols, via the stereoselective transport of L-nitrosocysteine (L-CNSO) across the transmembrane. Imports the thyroid hormone diiodothyronine (T2) and to a smaller extent triiodothyronine (T3) but not rT 3 or thyroxine (T4). Mediates the uptake of L-DOPA. May participate in auditory function. This Oryctolagus cuniculus (Rabbit) protein is Large neutral amino acids transporter small subunit 2.